The following is a 107-amino-acid chain: UPF0122 protein STH1464 (107 aa).

Belongs to the UPF0122 family.

Might take part in the signal recognition particle (SRP) pathway. This is inferred from the conservation of its genetic proximity to ftsY/ffh. May be a regulatory protein. The protein is UPF0122 protein STH1464 of Symbiobacterium thermophilum (strain DSM 24528 / JCM 14929 / IAM 14863 / T).